Consider the following 244-residue polypeptide: tRNA (guanine-N(7)-)-methyltransferase (244 aa).

S-adenosyl-L-methionine is bound by residues glutamate 75, glutamate 100, aspartate 127, and aspartate 150. Aspartate 150 is an active-site residue. Substrate contacts are provided by residues lysine 154, aspartate 186, and 223–226; that span reads TRFE.

It belongs to the class I-like SAM-binding methyltransferase superfamily. TrmB family.

The enzyme catalyses guanosine(46) in tRNA + S-adenosyl-L-methionine = N(7)-methylguanosine(46) in tRNA + S-adenosyl-L-homocysteine. Its pathway is tRNA modification; N(7)-methylguanine-tRNA biosynthesis. In terms of biological role, catalyzes the formation of N(7)-methylguanine at position 46 (m7G46) in tRNA. In Xylella fastidiosa (strain M23), this protein is tRNA (guanine-N(7)-)-methyltransferase.